The primary structure comprises 193 residues: ATP-dependent Clp protease proteolytic subunit (193 aa).

Catalysis depends on serine 98, which acts as the Nucleophile. The active site involves histidine 123.

The protein belongs to the peptidase S14 family. Fourteen ClpP subunits assemble into 2 heptameric rings which stack back to back to give a disk-like structure with a central cavity, resembling the structure of eukaryotic proteasomes.

The protein resides in the cytoplasm. It carries out the reaction Hydrolysis of proteins to small peptides in the presence of ATP and magnesium. alpha-casein is the usual test substrate. In the absence of ATP, only oligopeptides shorter than five residues are hydrolyzed (such as succinyl-Leu-Tyr-|-NHMec, and Leu-Tyr-Leu-|-Tyr-Trp, in which cleavage of the -Tyr-|-Leu- and -Tyr-|-Trp bonds also occurs).. Cleaves peptides in various proteins in a process that requires ATP hydrolysis. Has a chymotrypsin-like activity. Plays a major role in the degradation of misfolded proteins. The polypeptide is ATP-dependent Clp protease proteolytic subunit (Haemophilus influenzae (strain 86-028NP)).